The primary structure comprises 414 residues: Serine hydroxymethyltransferase (414 aa).

(6S)-5,6,7,8-tetrahydrofolate is bound by residues leucine 117 and 121–123; that span reads GHL. Residue lysine 226 is modified to N6-(pyridoxal phosphate)lysine.

It belongs to the SHMT family. As to quaternary structure, homodimer. It depends on pyridoxal 5'-phosphate as a cofactor.

The protein resides in the cytoplasm. The enzyme catalyses (6R)-5,10-methylene-5,6,7,8-tetrahydrofolate + glycine + H2O = (6S)-5,6,7,8-tetrahydrofolate + L-serine. Its pathway is one-carbon metabolism; tetrahydrofolate interconversion. It participates in amino-acid biosynthesis; glycine biosynthesis; glycine from L-serine: step 1/1. Functionally, catalyzes the reversible interconversion of serine and glycine with tetrahydrofolate (THF) serving as the one-carbon carrier. This reaction serves as the major source of one-carbon groups required for the biosynthesis of purines, thymidylate, methionine, and other important biomolecules. Also exhibits THF-independent aldolase activity toward beta-hydroxyamino acids, producing glycine and aldehydes, via a retro-aldol mechanism. This is Serine hydroxymethyltransferase from Dictyoglomus thermophilum (strain ATCC 35947 / DSM 3960 / H-6-12).